We begin with the raw amino-acid sequence, 129 residues long: Glycine cleavage system H protein (129 aa).

The Lipoyl-binding domain occupies 22 to 103 (TGTVGITDYA…AHTAWIMKIE (82 aa)). Lys63 is modified (N6-lipoyllysine).

Belongs to the GcvH family. In terms of assembly, the glycine cleavage system is composed of four proteins: P, T, L and H. (R)-lipoate serves as cofactor.

In terms of biological role, the glycine cleavage system catalyzes the degradation of glycine. The H protein shuttles the methylamine group of glycine from the P protein to the T protein. The sequence is that of Glycine cleavage system H protein from Acidobacterium capsulatum (strain ATCC 51196 / DSM 11244 / BCRC 80197 / JCM 7670 / NBRC 15755 / NCIMB 13165 / 161).